Here is a 306-residue protein sequence, read N- to C-terminus: tRNA (guanine-N(1)-)-methyltransferase (306 aa).

S-adenosyl-L-methionine-binding positions include glycine 157 and 182–187; that span reads IGDYVL.

Belongs to the RNA methyltransferase TrmD family. As to quaternary structure, homodimer.

It localises to the cytoplasm. The enzyme catalyses guanosine(37) in tRNA + S-adenosyl-L-methionine = N(1)-methylguanosine(37) in tRNA + S-adenosyl-L-homocysteine + H(+). Its function is as follows. Specifically methylates guanosine-37 in various tRNAs. The chain is tRNA (guanine-N(1)-)-methyltransferase from Bifidobacterium adolescentis (strain ATCC 15703 / DSM 20083 / NCTC 11814 / E194a).